We begin with the raw amino-acid sequence, 312 residues long: Probable deoxyhypusine synthase (312 aa).

The active-site Nucleophile is the Lys285.

It belongs to the deoxyhypusine synthase family. It depends on NAD(+) as a cofactor.

It carries out the reaction [eIF5A protein]-L-lysine + spermidine = [eIF5A protein]-deoxyhypusine + propane-1,3-diamine. The protein operates within protein modification; eIF5A hypusination. In terms of biological role, catalyzes the NAD-dependent oxidative cleavage of spermidine and the subsequent transfer of the butylamine moiety of spermidine to the epsilon-amino group of a specific lysine residue of the eIF-5A precursor protein to form the intermediate deoxyhypusine residue. The polypeptide is Probable deoxyhypusine synthase (dys) (Saccharolobus solfataricus (strain ATCC 35092 / DSM 1617 / JCM 11322 / P2) (Sulfolobus solfataricus)).